The following is a 146-amino-acid chain: Late protein H7 (146 aa).

Residues 10 to 32 (LAMTAFFGELNTLDIMALIMSIF) form a helical membrane-spanning segment.

It belongs to the chordopoxvirinae H7 family.

It localises to the membrane. Its function is as follows. Contributes to the formation of crescents and immature virions (IV). The protein is Late protein H7 of Vaccinia virus (strain Tian Tan) (VACV).